Consider the following 1872-residue polypeptide: Plexin-A3 (1872 aa).

A signal peptide spans 1–19 (MHTVCLLPLLFFTIGGCLG). The 470-residue stretch at 20 to 489 (SSRPFRTFVV…SEKQVSQLPV (470 aa)) folds into the Sema domain. Topologically, residues 20–1220 (SSRPFRTFVV…ITADRALTLP (1201 aa)) are extracellular. Asparagine 60 carries an N-linked (GlcNAc...) asparagine glycan. Intrachain disulfides connect cysteine 78–cysteine 87, cysteine 113–cysteine 121, cysteine 267–cysteine 388, cysteine 283–cysteine 339, cysteine 357–cysteine 376, cysteine 492–cysteine 509, cysteine 498–cysteine 540, cysteine 501–cysteine 518, and cysteine 512–cysteine 524. Asparagine 549 carries an N-linked (GlcNAc...) asparagine glycan. Cysteine 575 and cysteine 595 are oxidised to a cystine. IPT/TIG domains lie at 841–934 (PRIT…YSFV), 936–1021 (PTLD…YTYT), 1024–1123 (PTVT…FTYY), and 1126–1212 (PSFE…LHIT). Residue asparagine 1163 is glycosylated (N-linked (GlcNAc...) asparagine). The chain crosses the membrane as a helical span at residues 1221 to 1241 (AMVGLAAGGGLLLLAITVVLV). Residues 1240–1294 (LVAYKRKTQDADRTLKRLQLQMDNLESRVALECKEAFAELQTDINELTNHMDGVQ) adopt a coiled-coil conformation. Over 1242-1872 (AYKRKTQDAD…QIITLVSSSS (631 aa)) the chain is Cytoplasmic. Phosphoserine is present on serine 1597.

The protein belongs to the plexin family.

The protein resides in the cell membrane. Functionally, coreceptor for SEMA3A and SEMA3F. Necessary for signaling by class 3 semaphorins and subsequent remodeling of the cytoskeleton. Plays a role in axon guidance in the developing nervous system. Regulates the migration of sympathetic neurons, but not of neural crest precursors. Required for normal dendrite spine morphology in pyramidal neurons. May play a role in regulating semaphorin-mediated programmed cell death in the developing nervous system. Class 3 semaphorins bind to a complex composed of a neuropilin and a plexin. The plexin modulates the affinity of the complex for specific semaphorins, and its cytoplasmic domain is required for the activation of down-stream signaling events in the cytoplasm. This chain is Plexin-A3 (Plxna3), found in Rattus norvegicus (Rat).